A 271-amino-acid polypeptide reads, in one-letter code: Thiazole synthase (271 aa).

K104 serves as the catalytic Schiff-base intermediate with DXP. 1-deoxy-D-xylulose 5-phosphate-binding positions include G165, 192-193 (AG), and 214-215 (NT).

This sequence belongs to the ThiG family. In terms of assembly, homotetramer. Forms heterodimers with either ThiH or ThiS.

The protein localises to the cytoplasm. It catalyses the reaction [ThiS sulfur-carrier protein]-C-terminal-Gly-aminoethanethioate + 2-iminoacetate + 1-deoxy-D-xylulose 5-phosphate = [ThiS sulfur-carrier protein]-C-terminal Gly-Gly + 2-[(2R,5Z)-2-carboxy-4-methylthiazol-5(2H)-ylidene]ethyl phosphate + 2 H2O + H(+). It functions in the pathway cofactor biosynthesis; thiamine diphosphate biosynthesis. Catalyzes the rearrangement of 1-deoxy-D-xylulose 5-phosphate (DXP) to produce the thiazole phosphate moiety of thiamine. Sulfur is provided by the thiocarboxylate moiety of the carrier protein ThiS. In vitro, sulfur can be provided by H(2)S. This is Thiazole synthase from Burkholderia lata (strain ATCC 17760 / DSM 23089 / LMG 22485 / NCIMB 9086 / R18194 / 383).